Here is an 83-residue protein sequence, read N- to C-terminus: UPF0248 protein PH1212.1 (83 aa).

This sequence belongs to the UPF0248 family.

This chain is UPF0248 protein PH1212.1, found in Pyrococcus horikoshii (strain ATCC 700860 / DSM 12428 / JCM 9974 / NBRC 100139 / OT-3).